The sequence spans 173 residues: Protein GrpE (173 aa).

The segment covering 1-20 (MQDEFKTDTPRTEAGSEKET) has biased composition (basic and acidic residues). Residues 1 to 23 (MQDEFKTDTPRTEAGSEKETMPS) form a disordered region.

The protein belongs to the GrpE family. Homodimer.

The protein resides in the cytoplasm. In terms of biological role, participates actively in the response to hyperosmotic and heat shock by preventing the aggregation of stress-denatured proteins, in association with DnaK and GrpE. It is the nucleotide exchange factor for DnaK and may function as a thermosensor. Unfolded proteins bind initially to DnaJ; upon interaction with the DnaJ-bound protein, DnaK hydrolyzes its bound ATP, resulting in the formation of a stable complex. GrpE releases ADP from DnaK; ATP binding to DnaK triggers the release of the substrate protein, thus completing the reaction cycle. Several rounds of ATP-dependent interactions between DnaJ, DnaK and GrpE are required for fully efficient folding. The polypeptide is Protein GrpE (Thiobacillus denitrificans (strain ATCC 25259 / T1)).